Consider the following 160-residue polypeptide: Calcium-binding protein CP1 (160 aa).

EF-hand domains lie at 22–49 (AFEI…IPSG), 52–87 (NDET…TPFS), and 93–128 (GDDG…AGLA). Residues Asp27, Asp29, Asp31, Lys33, Asp38, Asp65, Asn67, Asp69, Glu76, Asp106, Asp108, Asp110, Arg112, and Asp117 each contribute to the Ca(2+) site.

As to expression, expressed in roots and flowers.

The protein resides in the cytoplasm. It localises to the cytosol. In terms of biological role, binds calcium in vitro. This chain is Calcium-binding protein CP1, found in Arabidopsis thaliana (Mouse-ear cress).